The primary structure comprises 192 residues: Adenine phosphoribosyltransferase 2 (192 aa).

The protein belongs to the purine/pyrimidine phosphoribosyltransferase family. As to quaternary structure, homodimer.

Its subcellular location is the cytoplasm. It catalyses the reaction AMP + diphosphate = 5-phospho-alpha-D-ribose 1-diphosphate + adenine. Its pathway is purine metabolism; AMP biosynthesis via salvage pathway; AMP from adenine: step 1/1. Its function is as follows. Catalyzes a salvage reaction resulting in the formation of AMP, that is energically less costly than de novo synthesis. May contribute to the recycling of adenine into adenylate nucleotides and the inactivation of cytokinins by phosphoribosylation. Possesses low activity toward adenine and cytokinins. In Arabidopsis thaliana (Mouse-ear cress), this protein is Adenine phosphoribosyltransferase 2 (APT2).